A 99-amino-acid chain; its full sequence is Malonate decarboxylase acyl carrier protein (99 aa).

The residue at position 25 (Ser-25) is an O-(phosphoribosyl dephospho-coenzyme A)serine.

It belongs to the MdcC family. Post-translationally, covalently binds the prosthetic group of malonate decarboxylase.

Its subcellular location is the cytoplasm. Functionally, subunit of malonate decarboxylase, it is an acyl carrier protein to which acetyl and malonyl thioester residues are bound via a 2'-(5''-phosphoribosyl)-3'-dephospho-CoA prosthetic group and turn over during the catalytic mechanism. The chain is Malonate decarboxylase acyl carrier protein from Azotobacter vinelandii (strain DJ / ATCC BAA-1303).